Consider the following 363-residue polypeptide: 3-isopropylmalate dehydrogenase (363 aa).

NAD(+) is bound at residue 78–91 (GKKWDYLPIESRPE). 4 residues coordinate substrate: Arg-99, Arg-109, Arg-138, and Asp-227. Positions 227, 251, and 255 each coordinate Mg(2+). 285–297 (GSAPDIEGKNIAN) is a binding site for NAD(+).

It belongs to the isocitrate and isopropylmalate dehydrogenases family. LeuB type 1 subfamily. Homodimer. Mg(2+) is required as a cofactor. Requires Mn(2+) as cofactor.

It localises to the cytoplasm. The enzyme catalyses (2R,3S)-3-isopropylmalate + NAD(+) = 4-methyl-2-oxopentanoate + CO2 + NADH. It participates in amino-acid biosynthesis; L-leucine biosynthesis; L-leucine from 3-methyl-2-oxobutanoate: step 3/4. In terms of biological role, catalyzes the oxidation of 3-carboxy-2-hydroxy-4-methylpentanoate (3-isopropylmalate) to 3-carboxy-4-methyl-2-oxopentanoate. The product decarboxylates to 4-methyl-2 oxopentanoate. The chain is 3-isopropylmalate dehydrogenase from Buchnera aphidicola subsp. Schizaphis graminum (strain Sg).